Consider the following 932-residue polypeptide: MKIKKIPWLGHFDDRGHRLSIFSIHIHPDGSRIATGGLDGTIRIWSTEAINRENENENENEDLPKQLCCMSTHTGTVTSVRFSPNGQYLASGSDDRVVIIWHKEEAIPGLGSTFGSGEKHTENWRSYRRLLGHDNDIQDLCWSYDSQLVVSVGLDSSIIVWNGTTFERLKRIEAHQSHVKGITFDPAGKYFATESDDRTIKVWRVSDFSIEKTITGPFNNSPLSTYFRRPSWSPDGKHIAAPNAMNGPVSCVSIIERGTWTSEINLIGHEGPVEVTAFNPKLFRDKNDKLVCILACGGQDRSLSIWSSALPRPLLSCQNVFQKSIGDVCWSPDGLSLFLCSYDGNVLVCTFEKEEFGDMVSDEEISKALAKYGHGRHGIVLPESAKQLELEETAYAILKKPSSLSTTDPTLVPQSSSTPKSAQKTPQKLPAFLPNRLTAETVDTNKLTASKEQIASPKRPGPSDNGNEIPTKFVQKVTITKEGKKRVAPQLLTTLSATPSTSRLASTQLQHTGSSQLPPQQFSQPINSLPKGGVPILIVGNKTKVNHENDESDQALQEEKIEEGLLKNYYSSLIDSSTSISNINFEAPRYKTNIVHSLNNEQKYVLEVKNGTSEKNPTRIVALENGNTKWMDYLPRPVILVTGSIHFWSIACDDGSLHLYSLTGSRLLPPIMIESKASFLHCNNAYLLCISSSGMVYAWNVVNKTALFTANSLAPILSRVSNNVTIENNSTDIPHVVIASISKEGVPSVTLSTGETYVYSSTMLCWQRITEPWWAIGSREWDSSGLLQSNTQTESQPLKIYEHRTNNVLMDSGRGKLLQKMVADAITEEGYDDFETIVTINHLENKIASARLLKLDDEFLVTSEVYVRLLMHHGLWQKLEEFLGELRTQTKCSIKLSGREVVAKMLVVLRQAVQTDNEFDRANKLIEKYAST.

WD repeat units follow at residues 16-55 (GHRLSIFSIHIHPDGSRIATGGLDGTIRIWSTEAINRENE), 72-111 (THTGTVTSVRFSPNGQYLASGSDDRVVIIWHKEEAIPGLG), 132-171 (GHDNDIQDLCWSYDSQLVVSVGLDSSIIVWNGTTFERLKR), 174-213 (AHQSHVKGITFDPAGKYFATESDDRTIKVWRVSDFSIEKT), 222-265 (PLST…SEIN), 268-316 (GHEG…PLLS), and 320-361 (VFQK…DMVS). 2 stretches are compositionally biased toward polar residues: residues 405–426 (STTDPTLVPQSSSTPKSAQKTP) and 441–453 (TVDTNKLTASKEQ). Disordered regions lie at residues 405–470 (STTD…NEIP) and 498–520 (TPSTSRLASTQLQHTGSSQLPPQ). Low complexity predominate over residues 498–507 (TPSTSRLAST).

This sequence belongs to the WD repeat HIR1 family. As to quaternary structure, interacts with his3 and slm9.

It is found in the cytoplasm. The protein localises to the nucleus. In terms of biological role, probably required for replication-independent chromatin assembly. Required for transcriptional silencing in the outer repeat (otr) centromeric repeats and the Tf2 long terminal repeat retrotransposons. Repressor of histone gene transcription in G1 arrested cells. Required for repression of htb1 gene expression outside of S phase. The chain is Protein hir1 (hip1) from Schizosaccharomyces pombe (strain 972 / ATCC 24843) (Fission yeast).